We begin with the raw amino-acid sequence, 220 residues long: UPF0502 protein CV_4303 (220 aa).

Belongs to the UPF0502 family.

This is UPF0502 protein CV_4303 from Chromobacterium violaceum (strain ATCC 12472 / DSM 30191 / JCM 1249 / CCUG 213 / NBRC 12614 / NCIMB 9131 / NCTC 9757 / MK).